The following is a 245-amino-acid chain: tRNA (guanine-N(1)-)-methyltransferase (245 aa).

Residues Gly-113 and 133-138 contribute to the S-adenosyl-L-methionine site; that span reads IGDYVL.

It belongs to the RNA methyltransferase TrmD family. As to quaternary structure, homodimer.

It is found in the cytoplasm. The catalysed reaction is guanosine(37) in tRNA + S-adenosyl-L-methionine = N(1)-methylguanosine(37) in tRNA + S-adenosyl-L-homocysteine + H(+). Specifically methylates guanosine-37 in various tRNAs. This Histophilus somni (strain 129Pt) (Haemophilus somnus) protein is tRNA (guanine-N(1)-)-methyltransferase.